The primary structure comprises 209 residues: Imidazole glycerol phosphate synthase subunit HisH (209 aa).

The region spanning 1 to 205 (MIAIIDYGMG…KGVVETWKSS (205 aa)) is the Glutamine amidotransferase type-1 domain. The Nucleophile role is filled by cysteine 79. Active-site residues include histidine 180 and glutamate 182.

In terms of assembly, heterodimer of HisH and HisF.

The protein localises to the cytoplasm. The catalysed reaction is 5-[(5-phospho-1-deoxy-D-ribulos-1-ylimino)methylamino]-1-(5-phospho-beta-D-ribosyl)imidazole-4-carboxamide + L-glutamine = D-erythro-1-(imidazol-4-yl)glycerol 3-phosphate + 5-amino-1-(5-phospho-beta-D-ribosyl)imidazole-4-carboxamide + L-glutamate + H(+). It carries out the reaction L-glutamine + H2O = L-glutamate + NH4(+). Its pathway is amino-acid biosynthesis; L-histidine biosynthesis; L-histidine from 5-phospho-alpha-D-ribose 1-diphosphate: step 5/9. IGPS catalyzes the conversion of PRFAR and glutamine to IGP, AICAR and glutamate. The HisH subunit catalyzes the hydrolysis of glutamine to glutamate and ammonia as part of the synthesis of IGP and AICAR. The resulting ammonia molecule is channeled to the active site of HisF. The chain is Imidazole glycerol phosphate synthase subunit HisH from Bacillus cereus (strain AH187).